A 442-amino-acid chain; its full sequence is Envelope glycoprotein D (442 aa).

The signal sequence occupies residues 1 to 19 (MPAVLLVLYVNPPPSVCIL). Residues 20 to 405 (TQKLSLGLYN…NSTFVGISVG (386 aa)) are Virion surface-facing. 2 N-linked (GlcNAc...) asparagine; by host glycosylation sites follow: asparagine 103 and asparagine 111. Disulfide bonds link cysteine 138-cysteine 259, cysteine 176-cysteine 273, and cysteine 188-cysteine 197. The disordered stretch occupies residues 331–364 (PDNHPGFDSVESEITQNKTDPKPGQADPKPNQPF). Asparagine 347 and asparagine 396 each carry an N-linked (GlcNAc...) asparagine; by host glycan. The helical transmembrane segment at 406–422 (LGIAGLVLVGVILYVCL) threads the bilayer. The Intravirion portion of the chain corresponds to 423 to 442 (RRKKELKVCTERLDSPTLDL).

Belongs to the herpesviridae glycoprotein D family.

Its subcellular location is the virion membrane. In terms of biological role, envelope glycoprotein that binds to host cell entry receptors, promoting the virus entry into host cells. May trigger fusion with host membrane, by recruiting the fusion machinery composed of gB and gH/gL. This chain is Envelope glycoprotein D (gD), found in Equine herpesvirus 1 (strain Kentucky A) (EHV-1).